The primary structure comprises 175 residues: NADH-ubiquinone oxidoreductase chain 6 (175 aa).

5 consecutive transmembrane segments (helical) span residues 1 to 21, 25 to 45, 47 to 67, 88 to 108, and 149 to 169; these read MMTY…VGFA, SPIY…AIVL, FGGS…MLVV, AVLA…CYIL, and YGTW…LVIM.

This sequence belongs to the complex I subunit 6 family. As to quaternary structure, core subunit of respiratory chain NADH dehydrogenase (Complex I) which is composed of 45 different subunits.

The protein localises to the mitochondrion inner membrane. The catalysed reaction is a ubiquinone + NADH + 5 H(+)(in) = a ubiquinol + NAD(+) + 4 H(+)(out). Core subunit of the mitochondrial membrane respiratory chain NADH dehydrogenase (Complex I) which catalyzes electron transfer from NADH through the respiratory chain, using ubiquinone as an electron acceptor. Essential for the catalytic activity and assembly of complex I. The protein is NADH-ubiquinone oxidoreductase chain 6 (MT-ND6) of Canis lupus familiaris (Dog).